We begin with the raw amino-acid sequence, 150 residues long: Large ribosomal subunit protein bL9 (150 aa).

Belongs to the bacterial ribosomal protein bL9 family.

Its function is as follows. Binds to the 23S rRNA. The chain is Large ribosomal subunit protein bL9 from Desulforudis audaxviator (strain MP104C).